The sequence spans 238 residues: tRNA (guanine-N(1)-)-methyltransferase (238 aa).

Residues Gly109 and 129-134 contribute to the S-adenosyl-L-methionine site; that span reads IGDFVL.

The protein belongs to the RNA methyltransferase TrmD family. Homodimer.

The protein localises to the cytoplasm. It carries out the reaction guanosine(37) in tRNA + S-adenosyl-L-methionine = N(1)-methylguanosine(37) in tRNA + S-adenosyl-L-homocysteine + H(+). In terms of biological role, specifically methylates guanosine-37 in various tRNAs. This Exiguobacterium sp. (strain ATCC BAA-1283 / AT1b) protein is tRNA (guanine-N(1)-)-methyltransferase.